The chain runs to 356 residues: sn-glycerol-3-phosphate import ATP-binding protein UgpC (356 aa).

One can recognise an ABC transporter domain in the interval Leu4–Ile235. Gly37–Ser44 provides a ligand contact to ATP.

Belongs to the ABC transporter superfamily. sn-glycerol-3-phosphate importer (TC 3.A.1.1.3) family. As to quaternary structure, the complex is composed of two ATP-binding proteins (UgpC), two transmembrane proteins (UgpA and UgpE) and a solute-binding protein (UgpB).

The protein localises to the cell inner membrane. The enzyme catalyses sn-glycerol 3-phosphate(out) + ATP + H2O = sn-glycerol 3-phosphate(in) + ADP + phosphate + H(+). In terms of biological role, part of the ABC transporter complex UgpBAEC involved in sn-glycerol-3-phosphate (G3P) import. Responsible for energy coupling to the transport system. The sequence is that of sn-glycerol-3-phosphate import ATP-binding protein UgpC from Salmonella typhimurium (strain LT2 / SGSC1412 / ATCC 700720).